The following is a 394-amino-acid chain: Elongation factor Tu (394 aa).

The 195-residue stretch at 10–204 (KPHVNVGTIG…ALDTYIPEPE (195 aa)) folds into the tr-type G domain. The interval 19–26 (GHVDHGKT) is G1. 19 to 26 (GHVDHGKT) provides a ligand contact to GTP. Residue threonine 26 coordinates Mg(2+). The segment at 60–64 (GITIN) is G2. A G3 region spans residues 81–84 (DCPG). GTP contacts are provided by residues 81–85 (DCPGH) and 136–139 (NKCD). Residues 136-139 (NKCD) are G4. Residues 174-176 (SAL) form a G5 region.

Belongs to the TRAFAC class translation factor GTPase superfamily. Classic translation factor GTPase family. EF-Tu/EF-1A subfamily. In terms of assembly, monomer.

The protein resides in the cytoplasm. It catalyses the reaction GTP + H2O = GDP + phosphate + H(+). Its function is as follows. GTP hydrolase that promotes the GTP-dependent binding of aminoacyl-tRNA to the A-site of ribosomes during protein biosynthesis. The protein is Elongation factor Tu of Colwellia psychrerythraea (strain 34H / ATCC BAA-681) (Vibrio psychroerythus).